The primary structure comprises 376 residues: uncharacterized protein (376 aa).

A helical transmembrane segment spans residues 19–39 (FVLISLILLLNLGLLLGIQIY).

This sequence to S.pombe SpAC5H10.12c.

It is found in the cytoplasm. The protein resides in the nucleus. The protein localises to the membrane. This is an uncharacterized protein from Schizosaccharomyces pombe (strain 972 / ATCC 24843) (Fission yeast).